The following is a 528-amino-acid chain: Pentatricopeptide repeat-containing protein At1g62914, mitochondrial (528 aa).

Residues 1 to 20 (MLAKISSSAKRFVHRSLVVR) constitute a mitochondrion transit peptide. PPR repeat units lie at residues 77–111 (SIIE…GISH), 112–146 (NLYT…GYEP), 147–181 (DIVT…GYKP), 182–216 (DTVT…GCQP), 217–251 (DLVT…KIEA), 252–286 (NVVI…GVRP), 287–321 (NVIT…KINP), 322–356 (NLVT…SIDP), 357–391 (NIFT…DCLP), 392–426 (NVVT…GLVG), 427–461 (NTVT…GVHP), 462–496 (NILT…TMEP), and 497–528 (DIYT…ALKE).

It belongs to the PPR family. P subfamily.

Its subcellular location is the mitochondrion. The chain is Pentatricopeptide repeat-containing protein At1g62914, mitochondrial from Arabidopsis thaliana (Mouse-ear cress).